The following is a 129-amino-acid chain: Phosphoribosyl-AMP cyclohydrolase (129 aa).

Residue aspartate 84 participates in Mg(2+) binding. Cysteine 85 is a Zn(2+) binding site. The Mg(2+) site is built by aspartate 86 and aspartate 88. Positions 101 and 108 each coordinate Zn(2+).

Belongs to the PRA-CH family. As to quaternary structure, homodimer. Mg(2+) serves as cofactor. It depends on Zn(2+) as a cofactor.

It is found in the cytoplasm. It carries out the reaction 1-(5-phospho-beta-D-ribosyl)-5'-AMP + H2O = 1-(5-phospho-beta-D-ribosyl)-5-[(5-phospho-beta-D-ribosylamino)methylideneamino]imidazole-4-carboxamide. The protein operates within amino-acid biosynthesis; L-histidine biosynthesis; L-histidine from 5-phospho-alpha-D-ribose 1-diphosphate: step 3/9. Catalyzes the hydrolysis of the adenine ring of phosphoribosyl-AMP. The chain is Phosphoribosyl-AMP cyclohydrolase from Halobacterium salinarum (strain ATCC 700922 / JCM 11081 / NRC-1) (Halobacterium halobium).